The sequence spans 384 residues: Dual specificity protein phosphatase 5 (384 aa).

The Rhodanese domain maps to 19 to 141; that stretch reads AAARCVVLDC…FYSEYPECCV (123 aa). The Nuclear localization signal signature appears at 53–74; the sequence is RRARGGAVSARYVLPDEAARAR. The Tyrosine-protein phosphatase domain maps to 178-319; the sequence is GPVEILPFLY…LLQYESEILP (142 aa). The Phosphocysteine intermediate role is filled by Cys263.

This sequence belongs to the protein-tyrosine phosphatase family. Non-receptor class dual specificity subfamily.

It is found in the nucleus. The catalysed reaction is O-phospho-L-tyrosyl-[protein] + H2O = L-tyrosyl-[protein] + phosphate. It carries out the reaction O-phospho-L-seryl-[protein] + H2O = L-seryl-[protein] + phosphate. It catalyses the reaction O-phospho-L-threonyl-[protein] + H2O = L-threonyl-[protein] + phosphate. Its function is as follows. Dual specificity protein phosphatase; active with phosphotyrosine, phosphoserine and phosphothreonine residues. The highest relative activity is toward ERK1. This is Dual specificity protein phosphatase 5 (DUSP5) from Homo sapiens (Human).